Reading from the N-terminus, the 123-residue chain is UPF0102 protein MCA0184 (123 aa).

This sequence belongs to the UPF0102 family.

This chain is UPF0102 protein MCA0184, found in Methylococcus capsulatus (strain ATCC 33009 / NCIMB 11132 / Bath).